Here is an 87-residue protein sequence, read N- to C-terminus: Sec-independent protein translocase protein TatA (87 aa).

Residues 3-23 (IFGIGLPEMIVILVVALLIFG) form a helical membrane-spanning segment. Residues 61–87 (EGVKVSTSASEPEKVVDVSSATNTNKN) form a disordered region.

It belongs to the TatA/E family. In terms of assembly, forms a complex with TatC.

The protein resides in the cell inner membrane. Part of the twin-arginine translocation (Tat) system that transports large folded proteins containing a characteristic twin-arginine motif in their signal peptide across membranes. TatA could form the protein-conducting channel of the Tat system. The protein is Sec-independent protein translocase protein TatA of Trichodesmium erythraeum (strain IMS101).